Reading from the N-terminus, the 149-residue chain is Large-conductance mechanosensitive channel (149 aa).

Transmembrane regions (helical) follow at residues 14-34 (VVDMAVGIIVGGAFGKLVNTL) and 85-105 (GLFINAMISFIIMAFAVYLLV).

The protein belongs to the MscL family. As to quaternary structure, homopentamer.

The protein resides in the cell inner membrane. Channel that opens in response to stretch forces in the membrane lipid bilayer. May participate in the regulation of osmotic pressure changes within the cell. The chain is Large-conductance mechanosensitive channel from Chlorobium phaeovibrioides (strain DSM 265 / 1930) (Prosthecochloris vibrioformis (strain DSM 265)).